The primary structure comprises 308 residues: 11-beta-hydroxysteroid dehydrogenase-like 2 (308 aa).

Residues 10–30 (FLLPPLTISFLVLFYPFYLFT) form a helical; Signal-anchor for type II membrane protein membrane-spanning segment. Residues 53 to 79 (GASSGIGEHVAYEYAKKGAKLALVARR) and D104 each bind NADP(+). S183 lines the substrate pocket. Y196 (proton acceptor) is an active-site residue. NADP(+) contacts are provided by residues 196 to 200 (YSASK) and K200.

This sequence belongs to the short-chain dehydrogenases/reductases (SDR) family.

The protein localises to the membrane. The chain is 11-beta-hydroxysteroid dehydrogenase-like 2 (HSD2) from Arabidopsis thaliana (Mouse-ear cress).